A 79-amino-acid polypeptide reads, in one-letter code: Cell division protein ZapB (79 aa).

A coiled-coil region spans residues 6 to 78 (FEKLEVKVQQ…LRALLGKMEE (73 aa)).

This sequence belongs to the ZapB family. In terms of assembly, homodimer. The ends of the coiled-coil dimer bind to each other, forming polymers. Interacts with FtsZ.

It is found in the cytoplasm. Its function is as follows. Non-essential, abundant cell division factor that is required for proper Z-ring formation. It is recruited early to the divisome by direct interaction with FtsZ, stimulating Z-ring assembly and thereby promoting cell division earlier in the cell cycle. Its recruitment to the Z-ring requires functional FtsA or ZipA. The polypeptide is Cell division protein ZapB (Yersinia pseudotuberculosis serotype O:1b (strain IP 31758)).